We begin with the raw amino-acid sequence, 456 residues long: tRNA modification GTPase MnmE (456 aa).

The (6S)-5-formyl-5,6,7,8-tetrahydrofolate site is built by Arg-24, Glu-81, and Lys-120. The 164-residue stretch at Gly-216–Gly-379 folds into the TrmE-type G domain. Asn-226 contacts K(+). GTP-binding positions include Asn-226–Ser-231, Thr-245–Thr-251, Asp-270–Gly-273, Asn-335–Asp-338, and Ser-359–Arg-361. Ser-230 is a binding site for Mg(2+). K(+) is bound by residues Thr-245, Ile-247, and Thr-250. Thr-251 serves as a coordination point for Mg(2+). Lys-456 contributes to the (6S)-5-formyl-5,6,7,8-tetrahydrofolate binding site.

Belongs to the TRAFAC class TrmE-Era-EngA-EngB-Septin-like GTPase superfamily. TrmE GTPase family. In terms of assembly, homodimer. Heterotetramer of two MnmE and two MnmG subunits. Requires K(+) as cofactor.

Its subcellular location is the cytoplasm. Its function is as follows. Exhibits a very high intrinsic GTPase hydrolysis rate. Involved in the addition of a carboxymethylaminomethyl (cmnm) group at the wobble position (U34) of certain tRNAs, forming tRNA-cmnm(5)s(2)U34. The sequence is that of tRNA modification GTPase MnmE from Pseudomonas entomophila (strain L48).